The sequence spans 150 residues: UPF0756 membrane protein HI_1074 (150 aa).

A run of 4 helical transmembrane segments spans residues 1 to 21, 52 to 72, 81 to 101, and 123 to 143; these read MTLQ…LGVL, YGVK…LVSG, GFLS…AWLA, and IIGV…AGIL.

Belongs to the UPF0756 family.

It is found in the cell membrane. The protein is UPF0756 membrane protein HI_1074 of Haemophilus influenzae (strain ATCC 51907 / DSM 11121 / KW20 / Rd).